Consider the following 787-residue polypeptide: Protein translocase subunit SecA (787 aa).

Residues glutamine 85, 103–107, and aspartate 492 contribute to the ATP site; that span reads GEGKT.

It belongs to the SecA family. Monomer and homodimer. Part of the essential Sec protein translocation apparatus which comprises SecA, SecYEG and auxiliary proteins SecDF. Other proteins may also be involved.

Its subcellular location is the cell membrane. It is found in the cytoplasm. It carries out the reaction ATP + H2O + cellular proteinSide 1 = ADP + phosphate + cellular proteinSide 2.. In terms of biological role, part of the Sec protein translocase complex. Interacts with the SecYEG preprotein conducting channel. Has a central role in coupling the hydrolysis of ATP to the transfer of proteins into and across the cell membrane, serving as an ATP-driven molecular motor driving the stepwise translocation of polypeptide chains across the membrane. The sequence is that of Protein translocase subunit SecA from Lactiplantibacillus plantarum (strain ATCC BAA-793 / NCIMB 8826 / WCFS1) (Lactobacillus plantarum).